Reading from the N-terminus, the 37-residue chain is Cytochrome b6-f complex subunit 5 (37 aa).

Residues 5-25 traverse the membrane as a helical segment; the sequence is SLFGIVLGLIPITLAGLFVTA.

The protein belongs to the PetG family. As to quaternary structure, the 4 large subunits of the cytochrome b6-f complex are cytochrome b6, subunit IV (17 kDa polypeptide, PetD), cytochrome f and the Rieske protein, while the 4 small subunits are PetG, PetL, PetM and PetN. The complex functions as a dimer.

It is found in the plastid. The protein localises to the chloroplast thylakoid membrane. In terms of biological role, component of the cytochrome b6-f complex, which mediates electron transfer between photosystem II (PSII) and photosystem I (PSI), cyclic electron flow around PSI, and state transitions. PetG is required for either the stability or assembly of the cytochrome b6-f complex. The protein is Cytochrome b6-f complex subunit 5 of Arabis hirsuta (Hairy rock-cress).